The following is a 125-amino-acid chain: Large ribosomal subunit protein bL19 (125 aa).

Belongs to the bacterial ribosomal protein bL19 family.

Its function is as follows. This protein is located at the 30S-50S ribosomal subunit interface and may play a role in the structure and function of the aminoacyl-tRNA binding site. The polypeptide is Large ribosomal subunit protein bL19 (Wolbachia pipientis subsp. Culex pipiens (strain wPip)).